We begin with the raw amino-acid sequence, 155 residues long: Putative pre-16S rRNA nuclease (155 aa).

It belongs to the YqgF nuclease family.

It localises to the cytoplasm. Its function is as follows. Could be a nuclease involved in processing of the 5'-end of pre-16S rRNA. The chain is Putative pre-16S rRNA nuclease from Xanthomonas campestris pv. campestris (strain B100).